The sequence spans 320 residues: NAC domain-containing protein 18 (320 aa).

The disordered stretch occupies residues M1–R22. Over residues G9 to P18 the composition is skewed to pro residues. One can recognise an NAC domain in the interval L17–K177. A DNA-binding region spans residues V118–S183.

As to expression, restricted primarily to the region of the embryo including the SAM. Expressed in the outer integument, but seems not expressed in the embryo at the torpedo stage.

Its subcellular location is the nucleus. In terms of biological role, may encode a transcription factor involved in the elaboration of shoot apical meristems (SAM). Together with NAC056/NARS1, regulates embryogenesis by regulating the development and degeneration of ovule integuments, a process required for intertissue communication between the embryo and the maternal integument. The polypeptide is NAC domain-containing protein 18 (NAC018) (Arabidopsis thaliana (Mouse-ear cress)).